A 108-amino-acid polypeptide reads, in one-letter code: Succinate dehydrogenase assembly factor 4, mitochondrial (108 aa).

Residues 1–20 (MTPSRLPWLLSWVSATAWRA) constitute a mitochondrion transit peptide. Residues 31–108 (RKTSSSQGGK…WERKGRCIDF (78 aa)) form a disordered region. 2 stretches are compositionally biased toward basic and acidic residues: residues 52 to 87 (KLPEGRFDAPEDSHLEKEPLEKFPDDVNPVTKEKGG) and 95 to 108 (RYGDWERKGRCIDF).

This sequence belongs to the SDHAF4 family. In terms of assembly, interacts with SDHA in its FAD-bound form.

The protein resides in the mitochondrion matrix. Its function is as follows. Plays an essential role in the assembly of succinate dehydrogenase (SDH), an enzyme complex (also referred to as respiratory complex II) that is a component of both the tricarboxylic acid (TCA) cycle and the mitochondrial electron transport chain, and which couples the oxidation of succinate to fumarate with the reduction of ubiquinone (coenzyme Q) to ubiquinol. Binds to the flavoprotein subunit SDHA in its FAD-bound form, blocking the generation of excess reactive oxygen species (ROS) and facilitating its assembly with the iron-sulfur protein subunit SDHB into the SDH catalytic dimer. The chain is Succinate dehydrogenase assembly factor 4, mitochondrial from Homo sapiens (Human).